Consider the following 360-residue polypeptide: Alpha-N-acetyl-neuraminyl-2,3-beta-galactosyl-1,3-N-acetyl-galactosaminide alpha-2,6-sialyltransferase (360 aa).

At 1–71 (MEHVVTCWRL…PGRLLLLTLC (71 aa)) the chain is on the cytoplasmic side. A helical; Signal-anchor for type II membrane protein transmembrane segment spans residues 72–94 (ILTFSAVCVFLCCWACLPLCLAT). Residues 95–360 (CLDRHLPAAP…VFAHPSWRAK (266 aa)) lie on the Lumenal side of the membrane. C134 and C283 are joined by a disulfide. The N-linked (GlcNAc...) asparagine glycan is linked to N193.

Belongs to the glycosyltransferase 29 family. In terms of tissue distribution, high expression in brain and colon and to a lesser extent in lung, heart, kidney, spleen and thymus.

It is found in the golgi apparatus membrane. It catalyses the reaction an alpha-Neu5Ac-(2-&gt;3)-beta-D-Gal-(1-&gt;3)-D-GlcNAc derivative + CMP-N-acetyl-beta-neuraminate = an alpha-Neu5Ac-(2-&gt;3)-beta-D-Gal-(1-&gt;3)-[alpha-Neu5Ac-(2-&gt;6)]-D-GlcNAc derivative + CMP + H(+). It carries out the reaction N-acetyl-alpha-neuraminosyl-(2-&gt;3)-beta-D-galactosyl-(1-&gt;3)-N-acetyl-D-galactosamine + CMP-N-acetyl-beta-neuraminate = N-acetyl-alpha-neuraminosyl-(2-&gt;3)-beta-D-galactosyl-(1-&gt;3)-[N-acetyl-alpha-neuraminosyl-(2-&gt;6)]-N-acetyl-D-galactosamine + CMP + H(+). The catalysed reaction is a ganglioside GM1b (d18:1(4E)) + CMP-N-acetyl-beta-neuraminate = a ganglioside GD1alpha (d18:1(4E)) + CMP + H(+). The enzyme catalyses 3-O-[alpha-Neu5Ac-(2-&gt;3)-beta-D-Gal-(1-&gt;3)-alpha-D-GalNAc]-L-Ser-[protein] + CMP-N-acetyl-beta-neuraminate = a 3-O-{alpha-Neu5Ac-(2-&gt;3)-beta-D-Gal-(1-&gt;3)-[alpha-Neu5Ac-(2-&gt;6)]-alpha-D-GalNAc}-L-seryl-[protein] + CMP + H(+). It catalyses the reaction 3-O-[alpha-Neu5Ac-(2-&gt;3)-beta-D-Gal-(1-&gt;3)-alpha-D-GalNAc]-L-Thr-[protein] + CMP-N-acetyl-beta-neuraminate = a 3-O-{alpha-Neu5Ac-(2-&gt;3)-beta-D-Gal-(1-&gt;3)-[alpha-Neu5Ac-(2-&gt;6)]-alpha-D-GalNAc}-L-threonyl-[protein] + CMP + H(+). It functions in the pathway protein modification; protein glycosylation. The protein operates within glycolipid biosynthesis. In terms of biological role, transfers the sialyl group (N-acetyl-alpha-neuraminyl or NeuAc) from CMP-NeuAc to the GalNAc residue on the NeuAc-alpha-2,3-Gal-beta-1,3-GalNAc sequence of glycoproteins and glycolipids forming an alpha-2,6-linkage. Produces branched type disialyl structures by transfer of a sialyl group onto a GalNAc residue inside the backbone core chains. Prefers O-glycans to glycoproteins or glycolipids. The sequence is that of Alpha-N-acetyl-neuraminyl-2,3-beta-galactosyl-1,3-N-acetyl-galactosaminide alpha-2,6-sialyltransferase (St6galnac4) from Mus musculus (Mouse).